The sequence spans 475 residues: tRNA modification GTPase MnmE (475 aa).

Residues arginine 32, glutamate 97, and lysine 136 each contribute to the (6S)-5-formyl-5,6,7,8-tetrahydrofolate site. A TrmE-type G domain is found at 232 to 396; it reads GVATVIAGRP…LKSRMSSMVE (165 aa). GTP contacts are provided by residues 242–247, 261–267, 286–289, and 377–379; these read NAGKST, SHMPGTT, DTAG, and SAR. 2 residues coordinate Mg(2+): serine 246 and threonine 267. Position 475 (lysine 475) interacts with (6S)-5-formyl-5,6,7,8-tetrahydrofolate.

This sequence belongs to the TRAFAC class TrmE-Era-EngA-EngB-Septin-like GTPase superfamily. TrmE GTPase family. In terms of assembly, homodimer. Heterotetramer of two MnmE and two MnmG subunits. It depends on K(+) as a cofactor.

Its subcellular location is the cytoplasm. Its function is as follows. Exhibits a very high intrinsic GTPase hydrolysis rate. Involved in the addition of a carboxymethylaminomethyl (cmnm) group at the wobble position (U34) of certain tRNAs, forming tRNA-cmnm(5)s(2)U34. The chain is tRNA modification GTPase MnmE from Chlorobium phaeobacteroides (strain DSM 266 / SMG 266 / 2430).